Consider the following 626-residue polypeptide: UvrABC system protein C (626 aa).

The GIY-YIG domain occupies 25 to 104 (TSPGVYRFSN…IKELKPRYNV (80 aa)). Positions 218–253 (SALLRDLSAEMQKKAKELKFEEAAALKAQIEGLKRY) constitute a UVR domain.

The protein belongs to the UvrC family. Interacts with UvrB in an incision complex.

It localises to the cytoplasm. The UvrABC repair system catalyzes the recognition and processing of DNA lesions. UvrC both incises the 5' and 3' sides of the lesion. The N-terminal half is responsible for the 3' incision and the C-terminal half is responsible for the 5' incision. The protein is UvrABC system protein C of Chlorobaculum tepidum (strain ATCC 49652 / DSM 12025 / NBRC 103806 / TLS) (Chlorobium tepidum).